The primary structure comprises 542 residues: Retron Ec83 probable ATPase (542 aa).

The short motif at 92–99 (GNNGCGKS) is the ATP-binding element.

In terms of biological role, probable ATPase component of antiviral defense system retron Ec83, composed of a non-coding RNA (ncRNA), a reverse transcriptase (RT), this protein and a putative HNH endonuclease. Expression of retron Ec83 confers protection against bacteriophage T2, T4 and T6. At multiplicity of infection (MOI) of 0.02 cultures slow growth when infected with T4 but do not collapse, at MOI 2 cultures enter growth stasis. The sequence is that of Retron Ec83 probable ATPase from Escherichia coli.